A 327-amino-acid polypeptide reads, in one-letter code: DNA polymerase III subunit delta' (327 aa).

DNA polymerase III contains a core (composed of alpha, epsilon and theta chains) that associates with a tau subunit. This core dimerizes to form the POLIII' complex. PolIII' associates with the gamma complex (composed of gamma, delta, delta', psi and chi chains) and with the beta chain to form the complete DNA polymerase III complex.

It carries out the reaction DNA(n) + a 2'-deoxyribonucleoside 5'-triphosphate = DNA(n+1) + diphosphate. DNA polymerase III is a complex, multichain enzyme responsible for most of the replicative synthesis in bacteria. This DNA polymerase also exhibits 3' to 5' exonuclease activity. This chain is DNA polymerase III subunit delta' (holB), found in Haemophilus influenzae (strain ATCC 51907 / DSM 11121 / KW20 / Rd).